Consider the following 626-residue polypeptide: tRNA uridine 5-carboxymethylaminomethyl modification enzyme MnmG (626 aa).

13–18 (GGGHAG) is an FAD binding site. Position 273 to 287 (273 to 287 (GPRYCPSIEDKIHRF)) interacts with NAD(+).

This sequence belongs to the MnmG family. In terms of assembly, homodimer. Heterotetramer of two MnmE and two MnmG subunits. The cofactor is FAD.

Its subcellular location is the cytoplasm. Its function is as follows. NAD-binding protein involved in the addition of a carboxymethylaminomethyl (cmnm) group at the wobble position (U34) of certain tRNAs, forming tRNA-cmnm(5)s(2)U34. This Acinetobacter baumannii (strain ACICU) protein is tRNA uridine 5-carboxymethylaminomethyl modification enzyme MnmG.